The following is a 308-amino-acid chain: Folate transporter 1, chloroplastic (308 aa).

3 Solcar repeats span residues 4-94 (SWQW…AKQR), 104-192 (LSPA…LRKI), and 213-299 (ADYA…VLKL). Helical transmembrane passes span 10 to 30 (ATAG…LDVV), 74 to 91 (VIGS…YGRA), 110 to 130 (LASA…IWLV), 164 to 184 (ALYK…IQFT), 216 to 236 (AALG…FQVI), and 274 to 293 (GLTA…FIVY).

Belongs to the mitochondrial carrier (TC 2.A.29) family. Ubiquitous.

It localises to the plastid. The protein resides in the chloroplast membrane. In terms of biological role, mediates folate import into chloroplast. The protein is Folate transporter 1, chloroplastic (FOLT1) of Arabidopsis thaliana (Mouse-ear cress).